The primary structure comprises 286 residues: Beta-lactamase SHV-5 (286 aa).

An N-terminal signal peptide occupies residues 1–21; that stretch reads MRYIRLCIISLLATLPLAVHA. S66 acts as the Acyl-ester intermediate in catalysis. C73 and C119 are joined by a disulfide. Catalysis depends on E164, which acts as the Proton acceptor. A substrate-binding site is contributed by 230 to 232; it reads KTG.

This sequence belongs to the class-A beta-lactamase family.

The enzyme catalyses a beta-lactam + H2O = a substituted beta-amino acid. SHV enzymes hydrolyze broad spectrum cephalosporins notably cefotaxime and ceftazidime. SHV-5 causes particularly high levels of resistance to aztreonam and ceftazidime. In Klebsiella pneumoniae, this protein is Beta-lactamase SHV-5 (bla).